A 384-amino-acid polypeptide reads, in one-letter code: Urotensin-2 receptor (384 aa).

Residues 1–54 are Extracellular-facing; sequence MALSPEPSSRFLVPATMGSAMPELPGAPNASLNSSLASPTEPNSLEDLVATGTI. N-linked (GlcNAc...) asparagine glycans are attached at residues asparagine 29 and asparagine 33. Residues 55-77 form a helical membrane-spanning segment; sequence GVVLSAMGVVGMAGNVYTLTVMC. The Cytoplasmic portion of the chain corresponds to 78-87; sequence RFLHTSASMY. A helical membrane pass occupies residues 88–113; that stretch reads VYVINLALADLLYLLSIPFIVATYVT. At 114 to 124 the chain is on the extracellular side; that stretch reads KRWHFGDVGCR. Cysteine 123 and cysteine 199 are disulfide-bonded. A helical membrane pass occupies residues 125-146; that stretch reads VLFSLDFLTMHASIFTLTLMSR. Over 147–167 the chain is Cytoplasmic; it reads ERYAAVVRPLDTVQRSKGYRK. The chain crosses the membrane as a helical span at residues 168 to 186; the sequence is VLALGTWLLALLLALPMML. Residues 187–209 are Extracellular-facing; the sequence is AIRLVRRGHKSLCLPAWGQRTHR. The chain crosses the membrane as a helical span at residues 210–232; the sequence is AYLTLLFGTSIVGPGVVIGLLYV. Topologically, residues 233–259 are cytoplasmic; that stretch reads RLARAYWLSQRSSFTQTRRLPNPRVLY. The chain crosses the membrane as a helical span at residues 260–285; the sequence is LILGIVLLFWACFLPFWLWQLLAQYR. At 286–299 the chain is on the extracellular side; the sequence is GAPPLAPRSARIVN. The helical transmembrane segment at 300-320 threads the bilayer; that stretch reads YLTTCLTYGNSCVNPFLYTLL. Topologically, residues 321 to 384 are cytoplasmic; that stretch reads TKNYRDYRQR…SQAVPGSLCV (64 aa).

Belongs to the G-protein coupled receptor 1 family. Expressed in neural tissue, including sensory epithelia.

It localises to the cell membrane. In terms of biological role, high affinity receptor for urotensin-2 and urotensin-2B. The activity of this receptor is mediated by a G-protein that activate a phosphatidylinositol-calcium second messenger system. The chain is Urotensin-2 receptor (UTS2R) from Bos taurus (Bovine).